A 387-amino-acid polypeptide reads, in one-letter code: Sorting nexin-7 (387 aa).

The PX domain occupies 30–151 (KDLFITVDEP…IFLTAQAWEL (122 aa)). A 1,2-diacyl-sn-glycero-3-phospho-(1D-myo-inositol-3-phosphate) is bound by residues Arg73, Gln75, Lys103, and Arg117. One can recognise a BAR domain in the interval 178 to 387 (GVKNRPEEFM…HLEETSEDKP (210 aa)).

This sequence belongs to the sorting nexin family. In terms of assembly, heterodimer; heterodimerizes with SNX4.

The protein localises to the early endosome membrane. Its function is as follows. Involved in the regulation of endocytosis and in several stages of intracellular trafficking. Together with SNX4, involved in autophagosome assembly by regulating trafficking and recycling of phospholipid scramblase ATG9A. In Macaca fascicularis (Crab-eating macaque), this protein is Sorting nexin-7 (SNX7).